Reading from the N-terminus, the 691-residue chain is MARSPVEPPASQPAKRAAWLRAELERANYAYYVLDQPDLPDAEYDRLFVELQRIEAEHPDLVTPDSPTQRVGGEAASGFTPVVHDKPMLSLNNGFADEDVIAFDKRVADGLDKATDLAGTVTEPVEYACELKFDGLAISLRYENGRFVQASTRGDGTTGEDVTENIRTIRAIPLTLKGKRIPRMLDVRGEVLMFKRDFARLNERQRAAGQREFANPRNAAAGSLRQLDSKITASRPLSFFAYGIGVLDGADMPDTHSGLLDWYETLGLPVNRERAVVRGAAGLLAFFHSVGERRESLPYDIDGVVYKVNRRDEQDRLGFVSRAPRFALAHKFPAQEALTKLTAIDVQVGRTGAITPVARLEPVFVGGATVTNATLHNEDEVRRKDIRIGDTVIVRRAGDVIPEVVSAVLDRRPADAQEFVMPTECPECGSRIERLPDEAIARCTGGLFCPAQRKQALWHFAQRRALDIDGLGEKIIDQLVEQNLVRTPADLFNLGFSTLVALDRFAEKSARNLIDSLEKAKHTTLARFIYALGIRHVGESTAKDLAKHFGSLDPIMDAPIDALLEVNDVGPIVAESIHQFFAEEHNRTVIEQLRARGKVTWPEGPPAPRAPQGVLAGKTVVLTGTLPTLTREAAKEMLEAAGAKVAGSVSKKTDYVVAGADAGSKLAKAEELGIPVLDEAGMHTLLEGHAR.

NAD(+)-binding positions include 41–45 (DAEYD), 90–91 (SL), and Glu130. The active-site N6-AMP-lysine intermediate is the Lys132. NAD(+)-binding residues include Arg153, Glu190, Lys307, and Lys331. Cys425, Cys428, Cys443, and Cys449 together coordinate Zn(2+). Residues 610–691 (APQGVLAGKT…MHTLLEGHAR (82 aa)) enclose the BRCT domain.

It belongs to the NAD-dependent DNA ligase family. LigA subfamily. Mg(2+) serves as cofactor. It depends on Mn(2+) as a cofactor.

It catalyses the reaction NAD(+) + (deoxyribonucleotide)n-3'-hydroxyl + 5'-phospho-(deoxyribonucleotide)m = (deoxyribonucleotide)n+m + AMP + beta-nicotinamide D-nucleotide.. Its function is as follows. DNA ligase that catalyzes the formation of phosphodiester linkages between 5'-phosphoryl and 3'-hydroxyl groups in double-stranded DNA using NAD as a coenzyme and as the energy source for the reaction. It is essential for DNA replication and repair of damaged DNA. The protein is DNA ligase of Burkholderia mallei (strain NCTC 10247).